Consider the following 98-residue polypeptide: Cystatin-B (98 aa).

Position 1 is an N-acetylmethionine (Met1). The short motif at 46 to 50 (QIVAG) is the Secondary area of contact element.

The protein belongs to the cystatin family. As to expression, widely expressed. Highest expression in heart, liver and kidney. Lower levels in brain, lung and skeletal muscle. Lowest levels in spleen and testis.

The protein resides in the cytoplasm. In terms of biological role, this is an intracellular thiol proteinase inhibitor. In Mus musculus (Mouse), this protein is Cystatin-B (Cstb).